Reading from the N-terminus, the 291-residue chain is Phosphatidylserine decarboxylase proenzyme 2 (291 aa).

Catalysis depends on charge relay system; for autoendoproteolytic cleavage activity residues D112 and S251. The active-site Schiff-base intermediate with substrate; via pyruvic acid; for decarboxylase activity is the S251. S251 bears the Pyruvic acid (Ser); by autocatalysis mark.

The protein belongs to the phosphatidylserine decarboxylase family. PSD-B subfamily. Prokaryotic type II sub-subfamily. Heterodimer of a large membrane-associated beta subunit and a small pyruvoyl-containing alpha subunit. Pyruvate serves as cofactor. In terms of processing, is synthesized initially as an inactive proenzyme. Formation of the active enzyme involves a self-maturation process in which the active site pyruvoyl group is generated from an internal serine residue via an autocatalytic post-translational modification. Two non-identical subunits are generated from the proenzyme in this reaction, and the pyruvate is formed at the N-terminus of the alpha chain, which is derived from the carboxyl end of the proenzyme. The autoendoproteolytic cleavage occurs by a canonical serine protease mechanism, in which the side chain hydroxyl group of the serine supplies its oxygen atom to form the C-terminus of the beta chain, while the remainder of the serine residue undergoes an oxidative deamination to produce ammonia and the pyruvoyl prosthetic group on the alpha chain. During this reaction, the Ser that is part of the protease active site of the proenzyme becomes the pyruvoyl prosthetic group, which constitutes an essential element of the active site of the mature decarboxylase.

It localises to the cell membrane. The enzyme catalyses a 1,2-diacyl-sn-glycero-3-phospho-L-serine + H(+) = a 1,2-diacyl-sn-glycero-3-phosphoethanolamine + CO2. Its pathway is phospholipid metabolism; phosphatidylethanolamine biosynthesis; phosphatidylethanolamine from CDP-diacylglycerol: step 2/2. Functionally, catalyzes the formation of phosphatidylethanolamine (PtdEtn) from phosphatidylserine (PtdSer). This is Phosphatidylserine decarboxylase proenzyme 2 from Clostridium acetobutylicum (strain ATCC 824 / DSM 792 / JCM 1419 / IAM 19013 / LMG 5710 / NBRC 13948 / NRRL B-527 / VKM B-1787 / 2291 / W).